The sequence spans 314 residues: MVTYLLANFGGPRTSQEIVSFLQALLTDRDVTGGMIPSMLHRPLFSYIAKRRAPHVARQYAYLGGGSPIFQDTERLAQNLSQELQASVIPFHRYLPETHRETLQALQESQGSIVGIPLFPHYTFAVTGSIIRFFLQHLPEKPISWITQFGVHPEFVSCMQQHIRDCLAAQQIAVEDCYFLFSVHGLPQRHIRLGDPYAQQCQASFEALRGELEGKIAFQSKFGIGKWLDPSTQEVCQSLRTKKRYIVIVPFGFVSDHIETLHEIDHLYVPILLQKGYRVVRIPAINASSRWVSSLAAIVRSSPQETSLEPLLMP.

The Fe cation site is built by H184 and E259.

This sequence belongs to the ferrochelatase family.

The protein localises to the cytoplasm. It carries out the reaction heme b + 2 H(+) = protoporphyrin IX + Fe(2+). It participates in porphyrin-containing compound metabolism; protoheme biosynthesis; protoheme from protoporphyrin-IX: step 1/1. Its function is as follows. Catalyzes the ferrous insertion into protoporphyrin IX. In Chlamydia trachomatis serovar D (strain ATCC VR-885 / DSM 19411 / UW-3/Cx), this protein is Ferrochelatase.